The sequence spans 104 residues: MYAIISVGNRQYKVTQDQEFLTEKTGKNAGESFDAKVLLFAESNNKVHIGQPELKTARVSLKVLEDVKGDKIHGYVYKRRKNYQKAWGHRQQLQKVKVVSLSAV.

It belongs to the bacterial ribosomal protein bL21 family. As to quaternary structure, part of the 50S ribosomal subunit. Contacts protein L20.

Functionally, this protein binds to 23S rRNA in the presence of protein L20. In Leptospira interrogans serogroup Icterohaemorrhagiae serovar copenhageni (strain Fiocruz L1-130), this protein is Large ribosomal subunit protein bL21.